The chain runs to 363 residues: NAD(P)H-quinone oxidoreductase subunit 1, chloroplastic (363 aa).

6 helical membrane passes run 30–50, 104–124, 127–147, 248–268, 300–320, and 343–363; these read LIPIFTLVLGITIGVLVIVWL, IAVISILLSYLVIPFSYHLVL, LSIGVFLWIAISSIAPVGLLM, YSGIKFGLFYVASYLNLLVSS, VFGTIIGIFITLAKTYLFLFI, and FLLPISLGNLLLTTCSQLISL.

Belongs to the complex I subunit 1 family. NDH is composed of at least 16 different subunits, 5 of which are encoded in the nucleus.

It localises to the plastid. The protein localises to the chloroplast thylakoid membrane. It catalyses the reaction a plastoquinone + NADH + (n+1) H(+)(in) = a plastoquinol + NAD(+) + n H(+)(out). The catalysed reaction is a plastoquinone + NADPH + (n+1) H(+)(in) = a plastoquinol + NADP(+) + n H(+)(out). NDH shuttles electrons from NAD(P)H:plastoquinone, via FMN and iron-sulfur (Fe-S) centers, to quinones in the photosynthetic chain and possibly in a chloroplast respiratory chain. The immediate electron acceptor for the enzyme in this species is believed to be plastoquinone. Couples the redox reaction to proton translocation, and thus conserves the redox energy in a proton gradient. This Lactuca sativa (Garden lettuce) protein is NAD(P)H-quinone oxidoreductase subunit 1, chloroplastic.